A 62-amino-acid polypeptide reads, in one-letter code: Potassium channel toxin kappa-KTx 1.4 (62 aa).

The N-terminal stretch at 1–26 (MKSCLINVSLLILLLLPILGYASVNA) is a signal peptide. A propeptide spanning residues 27–38 (ESIDGENDFEEE) is cleaved from the precursor. Cystine bridges form between C43-C61 and C47-C57.

This sequence belongs to the short scorpion toxin superfamily. Potassium channel inhibitor kappa-KTx family. Kappa-KTx 1 subfamily. As to expression, expressed by the venom gland.

The protein localises to the secreted. Shows structural homology with WaTx suggesting that it acts as a cell-penetrating peptide (CPP) with defensive purpose that induces pain by specifically activating mammalian sensory neuron TRPA1 channels. Has no effect on the voltage-gated potassium channels tested. The chain is Potassium channel toxin kappa-KTx 1.4 from Heterometrus petersii (Asian forest scorpion).